Consider the following 598-residue polypeptide: MFS siderochrome iron transporter D (598 aa).

The disordered stretch occupies residues 1 to 34 (MLSSWQKKFFQTPEHPPAEGIAPPRDDGVPNPEP). Over 1–76 (MLSSWQKKFF…AEAITLTWSK (76 aa)) the chain is Cytoplasmic. The chain crosses the membrane as a helical span at residues 77–97 (ISLGAAYFLMWLLYLVNGFQA). Residues 98–115 (SITGNLSAYVTSGFESHS) lie on the Extracellular side of the membrane. Residue asparagine 102 is glycosylated (N-linked (GlcNAc...) asparagine). The helical transmembrane segment at 116–136 (LIPVISIVSSVMSAATYMPLA) threads the bilayer. The Cytoplasmic portion of the chain corresponds to 137-144 (KVLNLWDR). A helical membrane pass occupies residues 145–165 (SIGFIIMVAFATLGLILSATC). The Extracellular portion of the chain corresponds to 166 to 171 (HDIGTY). The chain crosses the membrane as a helical span at residues 172–192 (CAAQVFYSIGFAGIIFSVDVI). Over 193–203 (TADTSTLRDRG) the chain is Cytoplasmic. A helical transmembrane segment spans residues 204 to 224 (LAYAFTSSPYIITAFGGPAAA). The Extracellular portion of the chain corresponds to 225-233 (EHFYDSNWR). Residues 234–254 (WAYGCFSIVLPVVALPMFCLL) traverse the membrane as a helical segment. Residues 255–289 (RWNRHKAKKSGLLKDKADSGRTWMESIRHYIIEFD) lie on the Cytoplasmic side of the membrane. A helical transmembrane segment spans residues 290–310 (ILGVFFLAAGLVLFLLPFSIA). Residues 311–318 (GSTEDDWK) lie on the Extracellular side of the membrane. Residues 319 to 339 (SASIITMLVIGFVCLLVFALV) form a helical membrane-spanning segment. Residues 340-341 (ER) are Cytoplasmic-facing. Residues 342–362 (FVAPVPFLPWALLASRTVLGA) traverse the membrane as a helical segment. Residues 363–396 (CMLDVCYQIAYYCWFNYYTSYLQVVYGTSITTAG) are Extracellular-facing. The chain crosses the membrane as a helical span at residues 397 to 417 (YITSIFDVVSGVWLFIVGFLI). Residues 418–424 (KKTNRFR) are Cytoplasmic-facing. The chain crosses the membrane as a helical span at residues 425–445 (WLLFIAVPLYILGVGLMIYFR). Residues 446–450 (KPSWS) lie on the Extracellular side of the membrane. Residues 451–471 (VGYMIMCQIFIAFAGGTMIIC) form a helical membrane-spanning segment. The Cytoplasmic portion of the chain corresponds to 472-490 (QQVAVLAASDHDHAASSLA). Residues 491 to 511 (FLNVFGTMGSAVGSSISGAIW) form a helical membrane-spanning segment. The Extracellular portion of the chain corresponds to 512-562 (THTLPGALQRLLPDSVKADWQTIYDSLEEQLSYERGTLIRQAIALAYASTQ). Residues 563–583 (SKMLIAGTAIMALSLVWMFVI) traverse the membrane as a helical segment. Residues 584-598 (RDIKLTKTQTKGVLF) lie on the Cytoplasmic side of the membrane.

This sequence belongs to the major facilitator superfamily.

The protein localises to the cell membrane. Major facilitator transporter involved in fusarinine C (FsC) uptake. In contrast to TAFC-mediated iron uptake, FsC-mediated iron uptake via mirD does not play a significant role during infection. The protein is MFS siderochrome iron transporter D of Aspergillus fumigatus (strain ATCC MYA-4609 / CBS 101355 / FGSC A1100 / Af293) (Neosartorya fumigata).